The following is a 352-amino-acid chain: Glycerol-1-phosphate dehydrogenase [NAD(P)+] (352 aa).

Residues 98-102 (GKAID) and 120-123 (TAAS) contribute to the NAD(+) site. A substrate-binding site is contributed by aspartate 125. Serine 129 is an NAD(+) binding site. Aspartate 172 lines the substrate pocket. Zn(2+) contacts are provided by aspartate 172 and histidine 252. Substrate is bound at residue histidine 256. Histidine 268 provides a ligand contact to Zn(2+).

This sequence belongs to the glycerol-1-phosphate dehydrogenase family. It depends on Zn(2+) as a cofactor.

It is found in the cytoplasm. The catalysed reaction is sn-glycerol 1-phosphate + NAD(+) = dihydroxyacetone phosphate + NADH + H(+). It carries out the reaction sn-glycerol 1-phosphate + NADP(+) = dihydroxyacetone phosphate + NADPH + H(+). Its pathway is membrane lipid metabolism; glycerophospholipid metabolism. Functionally, catalyzes the NAD(P)H-dependent reduction of dihydroxyacetonephosphate (DHAP or glycerone phosphate) to glycerol 1-phosphate (G1P). The G1P thus generated is used as the glycerophosphate backbone of phospholipids in the cellular membranes of Archaea. The polypeptide is Glycerol-1-phosphate dehydrogenase [NAD(P)+] (Halobacterium salinarum (strain ATCC 29341 / DSM 671 / R1)).